Reading from the N-terminus, the 460-residue chain is Ribosome biogenesis protein YTM1 (460 aa).

Residues 8–89 are ubiquitin-like (UBL) domain; the sequence is VKIRFFTREK…EASLNVEYTR (82 aa). The segment at 99-460 is sufficient for interaction with ERB1 and association with 66S pre-ribosomes; that stretch reads SFSNEDWVSS…INKGDNIFKN (362 aa). 7 WD repeats span residues 101-140, 142-180, 206-244, 285-325, 327-366, 373-413, and 424-460; these read SNED…QKQY, GHSG…LKLT, GHKA…MTVV, SHTA…CIDT, TTSY…SSKV, GHKN…PMYT, and GVND…IFKN.

Belongs to the WD repeat WDR12/YTM1 family. As to quaternary structure, component of the NOP7 complex, composed of ERB1, NOP7 and YTM1. The complex is held together by ERB1, which interacts with NOP7 via its N-terminal domain and with YTM1 via a high-affinity interaction between the seven-bladed beta-propeller domains of the 2 proteins. The NOP7 complex associates with the 66S pre-ribosome. Interacts (via UBL domain) with MDN1 (via VWFA/MIDAS domain).

The protein localises to the nucleus. Its subcellular location is the nucleolus. It localises to the nucleoplasm. Component of the NOP7 complex, which is required for maturation of the 25S and 5.8S ribosomal RNAs and formation of the 60S ribosome. This Saccharomyces cerevisiae (strain YJM789) (Baker's yeast) protein is Ribosome biogenesis protein YTM1.